Consider the following 85-residue polypeptide: Large ribosomal subunit protein bL27 (85 aa).

The segment at 1–21 is disordered; it reads MAHKKGVGSSRNGRDSDGQRL.

Belongs to the bacterial ribosomal protein bL27 family.

The protein is Large ribosomal subunit protein bL27 of Geobacter sp. (strain M21).